Reading from the N-terminus, the 505-residue chain is MEIRAEEISQIIREQIKDYEKQVELSETGRVLSVGDGIARVYGVEKCMSMELLEFPTEHGVVYGLALNLEEDNVGVAIMGEDIHIKEGSEVKRTGRIASVPVGDAVLGRIIDSVGNPVDGKGPIEAKEFSRVEVIAPGVIARQSVNEPMYTGLKAIDAMTPVGRGQRELIIGDRQIGKTAIAVDTIINQKDSGIICIYVAVGQKKSTVAQVVETLRKHGAMDYTIVVAANASDPAALQYIAPYAGCAMGEYYRDKGRHALIIYDDLSKQAAAYRQVSLLLRRPPAREAYPGDIFYNHSRLLERAAKLNAELGGGSLTALPIIETQAGDVSAYIPTNVISITDGQIYLEPNLFFAGVRPAINVGLSVSRVGGAAQTKAMKQVAGRLRLDLAQYRELEAFAKFGSDLDKATQAQLNRGMRMTELLKQPQYQPMPAEREVMSLYAGTRGHLDNIPVEKVLEFEKEMLSFVDRKYPEILSEIKEKKIISEELDGKMKKALEEFAGVFQA.

An ATP-binding site is contributed by Gly-172–Thr-179.

It belongs to the ATPase alpha/beta chains family. As to quaternary structure, F-type ATPases have 2 components, CF(1) - the catalytic core - and CF(0) - the membrane proton channel. CF(1) has five subunits: alpha(3), beta(3), gamma(1), delta(1), epsilon(1). CF(0) has three main subunits: a(1), b(2) and c(9-12). The alpha and beta chains form an alternating ring which encloses part of the gamma chain. CF(1) is attached to CF(0) by a central stalk formed by the gamma and epsilon chains, while a peripheral stalk is formed by the delta and b chains.

The protein localises to the cell inner membrane. It catalyses the reaction ATP + H2O + 4 H(+)(in) = ADP + phosphate + 5 H(+)(out). In terms of biological role, produces ATP from ADP in the presence of a proton gradient across the membrane. The alpha chain is a regulatory subunit. The polypeptide is ATP synthase subunit alpha (Syntrophobacter fumaroxidans (strain DSM 10017 / MPOB)).